Reading from the N-terminus, the 146-residue chain is Snaclec echicetin subunit beta (146 aa).

Residues 1 to 23 (MGRFISVSFGLLVLLLSLSGTGA) form the signal peptide. Intrachain disulfides connect Cys25/Cys36, Cys53/Cys142, and Cys119/Cys134. Residues 32–143 (YEGYCYKVFK…CTWTFSFVCK (112 aa)) form the C-type lectin domain.

This sequence belongs to the snaclec family. In terms of assembly, heterodimer of subunits alpha and beta; disulfide-linked. In terms of tissue distribution, expressed by the venom gland.

The protein localises to the secreted. In terms of biological role, binding of echicetin to glycoprotein Ibalpha (GP1BA) receptor on platelets alone results in inhibition of platelet aggregation, while binding to both GPIba receptor and IgMk promotes platelet aggregation and signal transduction. In Echis carinatus (Saw-scaled viper), this protein is Snaclec echicetin subunit beta.